Reading from the N-terminus, the 308-residue chain is Cytochrome b (308 aa).

4 helical membrane-spanning segments follow: residues F1–M21, W45–I66, W81–L101, and F146–T166. Heme b is bound by residues H51 and H65. 2 residues coordinate heme b: H150 and H164. Position 169 (H169) interacts with a ubiquinone. Transmembrane regions (helical) follow at residues I194 to S214, L256 to H276, and L288 to S308.

Belongs to the cytochrome b family. The cytochrome bc1 complex contains 11 subunits: 3 respiratory subunits (MT-CYB, CYC1 and UQCRFS1), 2 core proteins (UQCRC1 and UQCRC2) and 6 low-molecular weight proteins (UQCRH/QCR6, UQCRB/QCR7, UQCRQ/QCR8, UQCR10/QCR9, UQCR11/QCR10 and a cleavage product of UQCRFS1). This cytochrome bc1 complex then forms a dimer. The cofactor is heme b.

The protein resides in the mitochondrion inner membrane. In terms of biological role, component of the ubiquinol-cytochrome c reductase complex (complex III or cytochrome b-c1 complex) that is part of the mitochondrial respiratory chain. The b-c1 complex mediates electron transfer from ubiquinol to cytochrome c. Contributes to the generation of a proton gradient across the mitochondrial membrane that is then used for ATP synthesis. The protein is Cytochrome b (MT-CYB) of Corvus corax (Common raven).